The chain runs to 222 residues: Putative thymidylate synthase (222 aa).

Cys146 is an active-site residue.

It belongs to the thymidylate synthase family. Archaeal-type ThyA subfamily. Monomer.

Its subcellular location is the cytoplasm. It functions in the pathway pyrimidine metabolism; dTTP biosynthesis. May catalyze the biosynthesis of dTMP using an unknown cosubstrate. The protein is Putative thymidylate synthase of Methanothermobacter thermautotrophicus (strain ATCC 29096 / DSM 1053 / JCM 10044 / NBRC 100330 / Delta H) (Methanobacterium thermoautotrophicum).